Reading from the N-terminus, the 408-residue chain is Argininosuccinate synthase (408 aa).

Residues 10 to 18 and A37 contribute to the ATP site; that span reads AYSGGLDTS. Residues Y90 and S95 each contribute to the L-citrulline site. ATP is bound at residue G120. Positions 122, 126, and 127 each coordinate L-aspartate. N126 is an L-citrulline binding site. The L-citrulline site is built by R130, S182, S191, E267, and Y279.

It belongs to the argininosuccinate synthase family. Type 1 subfamily. As to quaternary structure, homotetramer.

The protein localises to the cytoplasm. The enzyme catalyses L-citrulline + L-aspartate + ATP = 2-(N(omega)-L-arginino)succinate + AMP + diphosphate + H(+). It participates in amino-acid biosynthesis; L-arginine biosynthesis; L-arginine from L-ornithine and carbamoyl phosphate: step 2/3. The protein is Argininosuccinate synthase of Paraburkholderia xenovorans (strain LB400).